We begin with the raw amino-acid sequence, 368 residues long: Protein-glutamate methylesterase/protein-glutamine glutaminase 1 (368 aa).

The Response regulatory domain maps to 4 to 121; that stretch reads KVLVVDDSGF…SRNPDKVRQL (118 aa). Asp55 bears the 4-aspartylphosphate mark. Residues 138 to 176 are disordered; sequence SLPPLPSATSSSHAPASSSSVGASARVGAGASPAPASTS. Residues 144-176 are compositionally biased toward low complexity; sequence SATSSSHAPASSSSVGASARVGAGASPAPASTS. A CheB-type methylesterase domain is found at 172 to 368; sequence PASTSAAPKR…IGRHLVEACQ (197 aa). Residues Ser192, His219, and Asp312 contribute to the active site.

Belongs to the CheB family. Post-translationally, phosphorylated by CheA. Phosphorylation of the N-terminal regulatory domain activates the methylesterase activity.

It is found in the cytoplasm. The catalysed reaction is [protein]-L-glutamate 5-O-methyl ester + H2O = L-glutamyl-[protein] + methanol + H(+). It carries out the reaction L-glutaminyl-[protein] + H2O = L-glutamyl-[protein] + NH4(+). Its function is as follows. Involved in chemotaxis. Part of a chemotaxis signal transduction system that modulates chemotaxis in response to various stimuli. Catalyzes the demethylation of specific methylglutamate residues introduced into the chemoreceptors (methyl-accepting chemotaxis proteins or MCP) by CheR. Also mediates the irreversible deamidation of specific glutamine residues to glutamic acid. The chain is Protein-glutamate methylesterase/protein-glutamine glutaminase 1 from Pseudomonas aeruginosa (strain ATCC 15692 / DSM 22644 / CIP 104116 / JCM 14847 / LMG 12228 / 1C / PRS 101 / PAO1).